We begin with the raw amino-acid sequence, 137 residues long: Large-conductance mechanosensitive channel (137 aa).

The next 3 helical transmembrane spans lie at 15–35 (IDLA…NSIV), 38–58 (IFMP…MFIQ), and 80–100 (GNFI…FLFV).

It belongs to the MscL family. As to quaternary structure, homopentamer.

The protein resides in the cell inner membrane. In terms of biological role, channel that opens in response to stretch forces in the membrane lipid bilayer. May participate in the regulation of osmotic pressure changes within the cell. The chain is Large-conductance mechanosensitive channel from Bartonella henselae (strain ATCC 49882 / DSM 28221 / CCUG 30454 / Houston 1) (Rochalimaea henselae).